A 211-amino-acid polypeptide reads, in one-letter code: Troponin I, cardiac muscle (211 aa).

Residues 1–25 (MADESSDAAGEPQPAPAPVRRRSSA) are disordered. Residue Ala2 is modified to N-acetylalanine. Phosphoserine is present on residues Ser5 and Ser6. Ser23 and Ser24 each carry phosphoserine; by PKA and PKD/PRKD1. Tyr27 is subject to Phosphotyrosine. Thr32 bears the Phosphothreonine; by STK4/MST1 mark. Residues 33-80 (EPHAKKKSKISASRKLQLKTLMLQIAKQEMEREAEERRGEKGRVLSTR) are involved in binding TNC. 2 positions are modified to phosphoserine; by PKC/PRKCE: Ser43 and Ser45. Phosphothreonine; by STK4/MST1 is present on Thr52. At Ser78 the chain carries Phosphoserine. Position 79 is a phosphothreonine (Thr79). 2 positions are modified to phosphothreonine; by STK4/MST1: Thr130 and Thr144. An involved in binding TNC and actin region spans residues 130-151 (TQKIYDLRGKFKRPTLRRVRIS). Ser151 is modified (phosphoserine; by PAK3). A phosphoserine mark is found at Ser167 and Ser200.

This sequence belongs to the troponin I family. Interacts with TRIM63. Binds to actin and tropomyosin. Interacts with STK4/MST1. Phosphorylated at Ser-23 and Ser-24 by PRKD1; phosphorylation reduces myofilament calcium sensitivity. Phosphorylated preferentially at Thr-32. Phosphorylation by STK4/MST1 alters its binding affinity to TNNC1 (cardiac Tn-C) and TNNT2 (cardiac Tn-T). Phosphorylated at Ser-43 and Ser-45 by PRKCE; phosphorylation increases myocardium contractile dysfunction.

Troponin I is the inhibitory subunit of troponin, the thin filament regulatory complex which confers calcium-sensitivity to striated muscle actomyosin ATPase activity. The polypeptide is Troponin I, cardiac muscle (Tnni3) (Rattus norvegicus (Rat)).